The following is a 1053-amino-acid chain: Translation initiation factor IF-2 (1053 aa).

The span at 1 to 20 (MSESKNSGENTLSVTPTKTL) shows a compositional bias: polar residues. Positions 1–442 (MSESKNSGEN…TATGGEEEER (442 aa)) are disordered. 2 stretches are compositionally biased toward low complexity: residues 64-76 (EAAP…ATVT) and 83-102 (RPAA…AAVP). Pro residues-rich tracts occupy residues 131–141 (PAQPKAEPVPA) and 150–161 (APVPPVPAPSAP). The span at 178–220 (PVSQAKPIQTAPVQTAPAAQASASQTTGPRPVAAGPRPATGAA) shows a compositional bias: low complexity. Residues 255 to 264 (GGRGGPGRGE) show a composition bias toward gly residues. 2 stretches are compositionally biased toward basic and acidic residues: residues 279–288 (LTDEEREARA) and 295–353 (RIRE…EAKR). A compositionally biased stretch (low complexity) spans 375-386 (TATAAAPAAAAP). Residues 550–720 (PRPPVVTIMG…ALQAELLDLK (171 aa)) enclose the tr-type G domain. Positions 559–566 (GHVDHGKT) are G1. 559-566 (GHVDHGKT) is a binding site for GTP. The tract at residues 584–588 (GITQH) is G2. The interval 606–609 (DTPG) is G3. GTP-binding positions include 606–610 (DTPGH) and 660–663 (NKID). The interval 660-663 (NKID) is G4. Residues 696 to 698 (SAT) form a G5 region.

Belongs to the TRAFAC class translation factor GTPase superfamily. Classic translation factor GTPase family. IF-2 subfamily.

The protein resides in the cytoplasm. Functionally, one of the essential components for the initiation of protein synthesis. Protects formylmethionyl-tRNA from spontaneous hydrolysis and promotes its binding to the 30S ribosomal subunits. Also involved in the hydrolysis of GTP during the formation of the 70S ribosomal complex. The chain is Translation initiation factor IF-2 from Beijerinckia indica subsp. indica (strain ATCC 9039 / DSM 1715 / NCIMB 8712).